Consider the following 83-residue polypeptide: uncharacterized protein (83 aa).

This is an uncharacterized protein from Methanocaldococcus jannaschii (strain ATCC 43067 / DSM 2661 / JAL-1 / JCM 10045 / NBRC 100440) (Methanococcus jannaschii).